The sequence spans 371 residues: Flagellar P-ring protein (371 aa).

Residues 1–28 (MPARPTPPAVPLALALAAALAAPAPAAA) form the signal peptide.

Belongs to the FlgI family. As to quaternary structure, the basal body constitutes a major portion of the flagellar organelle and consists of four rings (L,P,S, and M) mounted on a central rod.

The protein resides in the periplasm. It localises to the bacterial flagellum basal body. Its function is as follows. Assembles around the rod to form the L-ring and probably protects the motor/basal body from shearing forces during rotation. In Anaeromyxobacter dehalogenans (strain 2CP-C), this protein is Flagellar P-ring protein.